A 36-amino-acid chain; its full sequence is Kappa-actitoxin-Avd6a (36 aa).

The ShKT domain occupies 2 to 36; the sequence is CKDNFAAATCKHVKENKNCGSQKYATNCAKTCGKC. Cystine bridges form between cysteine 2-cysteine 36, cysteine 11-cysteine 29, and cysteine 20-cysteine 33. Residues 24–25 are crucial for binding to potassium channels; the sequence is KY.

It belongs to the sea anemone type 1 potassium channel toxin family. Type 1b subfamily.

The protein resides in the secreted. It is found in the nematocyst. Its function is as follows. Blocks voltage-gated potassium channels Kv1.2/KCNA2 (IC(50)=140 nM). The sequence is that of Kappa-actitoxin-Avd6a from Anemonia sulcata (Mediterranean snakelocks sea anemone).